We begin with the raw amino-acid sequence, 495 residues long: Autoinducer 2 import ATP-binding protein LsrA (495 aa).

ABC transporter domains lie at 5-233 (IEAH…TPVS) and 256-494 (AQDF…FGGQ). 37-44 (GGNGAGKS) is an ATP binding site.

It belongs to the ABC transporter superfamily. AI-2 autoinducer porter (TC 3.A.1.2.8) family. The complex is composed of two ATP-binding proteins (LsrA), two transmembrane proteins (LsrC and LsrD) and a solute-binding protein (LsrB).

It localises to the cell inner membrane. It carries out the reaction ATP + H2O + (2R,4S)-2-methyl-2,3,3,4-tetrahydroxytetrahydrofuran-[AI-2-binding protein]Side 1 = ADP + phosphate + (2R,4S)-2-methyl-2,3,3,4-tetrahydroxytetrahydrofuranSide 2 + [AI-2-binding protein]Side 1.. In terms of biological role, part of the ABC transporter complex LsrABCD involved in autoinducer 2 (AI-2) import. Responsible for energy coupling to the transport system. The chain is Autoinducer 2 import ATP-binding protein LsrA (lsrA) from Enterobacter sp. (strain 638).